We begin with the raw amino-acid sequence, 323 residues long: Galectin-4 (323 aa).

Galectin domains follow at residues Tyr-19 to Ile-150 and Tyr-194 to Ile-323. Trp-256–Lys-262 is a binding site for a beta-D-galactoside. Ser-258 carries the phosphoserine modification.

Monomer.

Its function is as follows. Galectin that binds lactose and a related range of sugars. May be involved in the assembly of adherens junctions. This is Galectin-4 (LGALS4) from Homo sapiens (Human).